The following is a 397-amino-acid chain: MNIHEYQAKALLKGYGAPVAEGVAILKVEEAAAAAKSLPGPLYVVKSQIHAGGRGKGKFKELSPEAKGGVRLAKSIEEVVAHAKEMLGNTLVTAQTGDAGKQVNRLYIEDGADIARELYCSILVDRSVGRVAFVVSTEGGMDIEAVAHDTPEKIQTIAIDPEAGVTAADVAAISKALQLDGAAAEDAKSLFPALYKAFNEKDMALLEVNPLIVMKDGHLRVLDAKMSFDGNALFRHDDVKTLRDETEEDAKEIEASKWDLAYVALDGNIGCMVNGAGLAMATMDIIKLYGKEPANFCDVGGGAGKEKVAAAFKIITADPKVEGILVNIFGGIMKCDVIAEGVIAAVKEVGLKVPLVVRLEGTNVELGKKILNESGLAITAADDLDDAAKKIVAAING.

An ATP-grasp domain is found at 9–254 (KALLKGYGAP…ETEEDAKEIE (246 aa)). Residues Lys46, 53-55 (GRG), Glu109, Ala112, and Glu117 contribute to the ATP site. Residues Asn209 and Asp223 each contribute to the Mg(2+) site. Residues Asn274 and 331-333 (GIM) contribute to the substrate site.

Belongs to the succinate/malate CoA ligase beta subunit family. In terms of assembly, heterotetramer of two alpha and two beta subunits. Mg(2+) serves as cofactor.

The catalysed reaction is succinate + ATP + CoA = succinyl-CoA + ADP + phosphate. It catalyses the reaction GTP + succinate + CoA = succinyl-CoA + GDP + phosphate. The protein operates within carbohydrate metabolism; tricarboxylic acid cycle; succinate from succinyl-CoA (ligase route): step 1/1. Functionally, succinyl-CoA synthetase functions in the citric acid cycle (TCA), coupling the hydrolysis of succinyl-CoA to the synthesis of either ATP or GTP and thus represents the only step of substrate-level phosphorylation in the TCA. The beta subunit provides nucleotide specificity of the enzyme and binds the substrate succinate, while the binding sites for coenzyme A and phosphate are found in the alpha subunit. This is Succinate--CoA ligase [ADP-forming] subunit beta from Rhizobium leguminosarum bv. trifolii (strain WSM2304).